The following is a 64-amino-acid chain: MPKIIEAIYENGVFKPLQKVDLKEGERVRIKLEKVEEVVDEVFGILKGKDTLKALRELEEWGFC.

Belongs to the UPF0165 family.

In terms of biological role, possibly the antitoxin component of a type II toxin-antitoxin (TA) system. In Archaeoglobus fulgidus (strain ATCC 49558 / DSM 4304 / JCM 9628 / NBRC 100126 / VC-16), this protein is Putative antitoxin AF_1074.